We begin with the raw amino-acid sequence, 245 residues long: MVAVSGTQHTRTVSPTRWIVYAGSVFAGAWLATQLFYLAQIALWSFVNPGSTAFMRTDAWWLSRDKPPAQIQHQWVPYDQISRNLKRALIASEDSTFATNNGYDVDAILQAWEKNKARGRIVAGGSTITQQLARNLFLSREKSYIRKGQELIITWMLETVLDKERIFEIYLNSVEWGRGVYGAEAAARYYYRIPASRLGAWQSARLAVMLPKPRWFDAHRGSAYQAQRAAVIARRMGAAELPQSE.

A helical transmembrane segment spans residues 20–42 (VYAGSVFAGAWLATQLFYLAQIA).

It belongs to the glycosyltransferase 51 family.

The protein resides in the cell inner membrane. The enzyme catalyses [GlcNAc-(1-&gt;4)-Mur2Ac(oyl-L-Ala-gamma-D-Glu-L-Lys-D-Ala-D-Ala)](n)-di-trans,octa-cis-undecaprenyl diphosphate + beta-D-GlcNAc-(1-&gt;4)-Mur2Ac(oyl-L-Ala-gamma-D-Glu-L-Lys-D-Ala-D-Ala)-di-trans,octa-cis-undecaprenyl diphosphate = [GlcNAc-(1-&gt;4)-Mur2Ac(oyl-L-Ala-gamma-D-Glu-L-Lys-D-Ala-D-Ala)](n+1)-di-trans,octa-cis-undecaprenyl diphosphate + di-trans,octa-cis-undecaprenyl diphosphate + H(+). It functions in the pathway cell wall biogenesis; peptidoglycan biosynthesis. Functionally, peptidoglycan polymerase that catalyzes glycan chain elongation from lipid-linked precursors. The chain is Biosynthetic peptidoglycan transglycosylase from Burkholderia lata (strain ATCC 17760 / DSM 23089 / LMG 22485 / NCIMB 9086 / R18194 / 383).